Consider the following 135-residue polypeptide: Transcription antitermination protein NusB (135 aa).

Belongs to the NusB family.

Its function is as follows. Involved in transcription antitermination. Required for transcription of ribosomal RNA (rRNA) genes. Binds specifically to the boxA antiterminator sequence of the ribosomal RNA (rrn) operons. This chain is Transcription antitermination protein NusB, found in Clostridium perfringens (strain SM101 / Type A).